A 359-amino-acid polypeptide reads, in one-letter code: Archaemetzincin-2 (359 aa).

A Zn(2+)-binding site is contributed by His-254. The active-site Proton acceptor is Glu-255. His-258, His-264, Cys-265, Cys-270, Cys-289, and Cys-292 together coordinate Zn(2+).

This sequence belongs to the peptidase M54 family. Requires Zn(2+) as cofactor. As to expression, predominantly expressed in testis.

Probable zinc metalloprotease. The sequence is that of Archaemetzincin-2 (Amz2) from Mus musculus (Mouse).